A 201-amino-acid chain; its full sequence is HTH-type transcriptional regulator Hpr (201 aa).

The HTH marR-type domain occupies 13–157 (AMLFSQRIAQ…MMCIIRNIYG (145 aa)). Positions 63 to 86 (ISEIAKFGVMHVSTAFNFSKKLEE) form a DNA-binding region, H-T-H motif.

In terms of assembly, homodimer.

Negative regulator of protease production and sporulation. The chain is HTH-type transcriptional regulator Hpr from Geobacillus sp. (strain WCH70).